A 326-amino-acid polypeptide reads, in one-letter code: tRNA-modifying protein YgfZ (326 aa).

Residues W27 and W189 each contribute to the folate site.

This sequence belongs to the tRNA-modifying YgfZ family.

The protein resides in the cytoplasm. In terms of biological role, folate-binding protein involved in regulating the level of ATP-DnaA and in the modification of some tRNAs. It is probably a key factor in regulatory networks that act via tRNA modification, such as initiation of chromosomal replication. The polypeptide is tRNA-modifying protein YgfZ (Salmonella schwarzengrund (strain CVM19633)).